Reading from the N-terminus, the 120-residue chain is Large ribosomal subunit protein uL22 (120 aa).

Residues 1–25 (MFVNKKYTAKGKNLPSSPKKVRPIA) form a disordered region.

It belongs to the universal ribosomal protein uL22 family. As to quaternary structure, part of the 50S ribosomal subunit.

Functionally, this protein binds specifically to 23S rRNA; its binding is stimulated by other ribosomal proteins, e.g. L4, L17, and L20. It is important during the early stages of 50S assembly. It makes multiple contacts with different domains of the 23S rRNA in the assembled 50S subunit and ribosome. Its function is as follows. The globular domain of the protein is located near the polypeptide exit tunnel on the outside of the subunit, while an extended beta-hairpin is found that lines the wall of the exit tunnel in the center of the 70S ribosome. This Borrelia recurrentis (strain A1) protein is Large ribosomal subunit protein uL22.